A 111-amino-acid polypeptide reads, in one-letter code: Large ribosomal subunit protein uL22 (111 aa).

The protein belongs to the universal ribosomal protein uL22 family. As to quaternary structure, part of the 50S ribosomal subunit.

Functionally, this protein binds specifically to 23S rRNA; its binding is stimulated by other ribosomal proteins, e.g. L4, L17, and L20. It is important during the early stages of 50S assembly. It makes multiple contacts with different domains of the 23S rRNA in the assembled 50S subunit and ribosome. In terms of biological role, the globular domain of the protein is located near the polypeptide exit tunnel on the outside of the subunit, while an extended beta-hairpin is found that lines the wall of the exit tunnel in the center of the 70S ribosome. The protein is Large ribosomal subunit protein uL22 of Clostridium novyi (strain NT).